A 326-amino-acid chain; its full sequence is Macrosialin (326 aa).

The N-terminal stretch at 1–20 is a signal peptide; it reads MRLPVCLILLGPLIAQGTEE. The interval 21-109 is mucin-like; sequence DCPHKKAVTL…ATSPRSSTVG (89 aa). Over 21–291 the chain is Extracellular; that stretch reads DCPHKKAVTL…PCFSCNRDQS (271 aa). Residues 38–58 show a composition bias toward low complexity; that stretch reads PTATESTASPTTSHRPTTTSH. The disordered stretch occupies residues 38–129; that stretch reads PTATESTASP…SPRSKGALGN (92 aa). A run of 4 repeats spans residues 44–49, 50–64, 65–72, and 73–88. The segment covering 59–69 has biased composition (polar residues); sequence GNVTVHTSSGP. N-linked (GlcNAc...) asparagine glycosylation is present at N60. A compositionally biased stretch (low complexity) spans 70-80; that stretch reads TTVTHNPATTT. Over residues 81–108 the composition is skewed to polar residues; that stretch reads SHGNATISHATVSPTTNGTATSPRSSTV. N-linked (GlcNAc...) asparagine glycosylation is found at N84 and N97. Positions 111 to 120 are enriched in pro residues; it reads HPGPPPPSPS. N-linked (GlcNAc...) asparagine glycosylation is found at N129, N134, N169, N218, N233, and N251. Cysteines 139 and 177 form a disulfide. Residues C249 and C286 are joined by a disulfide bond. The helical transmembrane segment at 292–316 threads the bilayer; sequence LLLPLIIGLVLLGLLTLVLIAFCIT. Topologically, residues 317–326 are cytoplasmic; it reads RRRQSTYQPL.

It belongs to the LAMP family. N- and O-glycosylated. In terms of tissue distribution, expressed in tissue macrophages and to a lesser extent in dendritic cells.

Its subcellular location is the endosome membrane. It is found in the lysosome membrane. The protein resides in the cell membrane. Could play a role in phagocytic activities of tissue macrophages, both in intracellular lysosomal metabolism and extracellular cell-cell and cell-pathogen interactions. Binds to tissue- and organ-specific lectins or selectins, allowing homing of macrophage subsets to particular sites. Rapid recirculation of CD68 from endosomes and lysosomes to the plasma membrane may allow macrophages to crawl over selectin-bearing substrates or other cells. This chain is Macrosialin (Cd68), found in Mus musculus (Mouse).